The following is a 70-amino-acid chain: Bowman-Birk type proteinase inhibitor A-II (70 aa).

Cystine bridges form between C11–C68, C12–C29, C15–C63, C17–C27, C36–C43, C40–C55, and C45–C53.

Belongs to the Bowman-Birk serine protease inhibitor family.

In terms of biological role, these proteins inhibit trypsin and chymotrypsin, having 2 sites of interaction with trypsin. The site of interaction with chymotrypsin has not been determined but is not independent of the trypsin-reactive sites. This chain is Bowman-Birk type proteinase inhibitor A-II, found in Arachis hypogaea (Peanut).